Reading from the N-terminus, the 190-residue chain is Xanthine phosphoribosyltransferase (190 aa).

Leucine 20 and asparagine 27 together coordinate xanthine. 128 to 132 is a binding site for 5-phospho-alpha-D-ribose 1-diphosphate; that stretch reads ANGHA. Position 156 (lysine 156) interacts with xanthine.

It belongs to the purine/pyrimidine phosphoribosyltransferase family. Xpt subfamily. In terms of assembly, homodimer.

Its subcellular location is the cytoplasm. The catalysed reaction is XMP + diphosphate = xanthine + 5-phospho-alpha-D-ribose 1-diphosphate. The protein operates within purine metabolism; XMP biosynthesis via salvage pathway; XMP from xanthine: step 1/1. In terms of biological role, converts the preformed base xanthine, a product of nucleic acid breakdown, to xanthosine 5'-monophosphate (XMP), so it can be reused for RNA or DNA synthesis. The chain is Xanthine phosphoribosyltransferase from Ectopseudomonas mendocina (strain ymp) (Pseudomonas mendocina).